A 477-amino-acid polypeptide reads, in one-letter code: Glycogen synthase (477 aa).

Residue Lys-15 participates in ADP-alpha-D-glucose binding.

The protein belongs to the glycosyltransferase 1 family. Bacterial/plant glycogen synthase subfamily.

It carries out the reaction [(1-&gt;4)-alpha-D-glucosyl](n) + ADP-alpha-D-glucose = [(1-&gt;4)-alpha-D-glucosyl](n+1) + ADP + H(+). The protein operates within glycan biosynthesis; glycogen biosynthesis. Synthesizes alpha-1,4-glucan chains using ADP-glucose. The protein is Glycogen synthase of Serratia proteamaculans (strain 568).